The sequence spans 460 residues: ATP synthase subunit beta (460 aa).

Residue 149 to 156 (GGAGVGKT) participates in ATP binding.

This sequence belongs to the ATPase alpha/beta chains family. In terms of assembly, F-type ATPases have 2 components, CF(1) - the catalytic core - and CF(0) - the membrane proton channel. CF(1) has five subunits: alpha(3), beta(3), gamma(1), delta(1), epsilon(1). CF(0) has three main subunits: a(1), b(2) and c(9-12). The alpha and beta chains form an alternating ring which encloses part of the gamma chain. CF(1) is attached to CF(0) by a central stalk formed by the gamma and epsilon chains, while a peripheral stalk is formed by the delta and b chains.

Its subcellular location is the cell inner membrane. It carries out the reaction ATP + H2O + 4 H(+)(in) = ADP + phosphate + 5 H(+)(out). In terms of biological role, produces ATP from ADP in the presence of a proton gradient across the membrane. The catalytic sites are hosted primarily by the beta subunits. In Nitrosomonas europaea (strain ATCC 19718 / CIP 103999 / KCTC 2705 / NBRC 14298), this protein is ATP synthase subunit beta.